The sequence spans 154 residues: Putative glutamine amidotransferase-like protein RP712 (154 aa).

The 94-residue stretch at 1 to 94 folds into the Glutamine amidotransferase type-1 domain; that stretch reads MSIEKEKFWA…QQSVWSFHNK (94 aa).

This Rickettsia prowazekii (strain Madrid E) protein is Putative glutamine amidotransferase-like protein RP712.